We begin with the raw amino-acid sequence, 503 residues long: Probable cytosol aminopeptidase (503 aa).

The Mn(2+) site is built by Lys-270 and Asp-275. Residue Lys-282 is part of the active site. Residues Asp-293, Asp-352, and Glu-354 each coordinate Mn(2+). Arg-356 is a catalytic residue.

It belongs to the peptidase M17 family. Mn(2+) is required as a cofactor.

The protein localises to the cytoplasm. The enzyme catalyses Release of an N-terminal amino acid, Xaa-|-Yaa-, in which Xaa is preferably Leu, but may be other amino acids including Pro although not Arg or Lys, and Yaa may be Pro. Amino acid amides and methyl esters are also readily hydrolyzed, but rates on arylamides are exceedingly low.. The catalysed reaction is Release of an N-terminal amino acid, preferentially leucine, but not glutamic or aspartic acids.. Presumably involved in the processing and regular turnover of intracellular proteins. Catalyzes the removal of unsubstituted N-terminal amino acids from various peptides. The sequence is that of Probable cytosol aminopeptidase from Yersinia pseudotuberculosis serotype O:1b (strain IP 31758).